The sequence spans 614 residues: Zinc metalloproteinase-disintegrin-like BmMP (614 aa).

The N-terminal stretch at 1 to 20 (MIQALLVTICLAVFPYQGSS) is a signal peptide. Positions 21 to 188 (IILESGNVND…WESDEPIRNA (168 aa)) are excised as a propeptide. An N-linked (GlcNAc...) asparagine glycan is attached at N187. The Peptidase M12B domain occupies 205–401 (KYIEFYVAVD…DRPQCILNKP (197 aa)). 17 disulfide bridges follow: C316/C396, C356/C380, C359/C364, C412/C441, C423/C436, C425/C431, C435/C458, C449/C455, C454/C480, C467/C487, C474/C506, C499/C511, C518/C568, C533/C576, C546/C556, C563/C602, and C596/C607. H341 contributes to the Zn(2+) binding site. The active site involves E342. Zn(2+)-binding residues include H345 and H351. The Disintegrin domain maps to 409–495 (PAICGNYFVE…ECPTDIFRRN (87 aa)). Positions 473 to 475 (DCD) match the D/ECD-tripeptide motif.

The protein belongs to the venom metalloproteinase (M12B) family. P-III subfamily. P-IIIa sub-subfamily. Monomer. The cofactor is Zn(2+). Expressed by the venom gland.

The protein resides in the secreted. Snake venom zinc metalloproteinase that inhibits platelet aggregation and degrades fibrinogen. This chain is Zinc metalloproteinase-disintegrin-like BmMP, found in Bungarus multicinctus (Many-banded krait).